Reading from the N-terminus, the 79-residue chain is Small ribosomal subunit protein uS17 (79 aa).

This sequence belongs to the universal ribosomal protein uS17 family. As to quaternary structure, part of the 30S ribosomal subunit.

In terms of biological role, one of the primary rRNA binding proteins, it binds specifically to the 5'-end of 16S ribosomal RNA. The protein is Small ribosomal subunit protein uS17 of Bartonella tribocorum (strain CIP 105476 / IBS 506).